A 256-amino-acid polypeptide reads, in one-letter code: 6-phosphogluconolactonase (256 aa).

It belongs to the glucosamine/galactosamine-6-phosphate isomerase family. 6-phosphogluconolactonase subfamily.

The catalysed reaction is 6-phospho-D-glucono-1,5-lactone + H2O = 6-phospho-D-gluconate + H(+). It functions in the pathway carbohydrate degradation; pentose phosphate pathway; D-ribulose 5-phosphate from D-glucose 6-phosphate (oxidative stage): step 2/3. Functionally, hydrolysis of 6-phosphogluconolactone to 6-phosphogluconate. This chain is 6-phosphogluconolactonase (pgl), found in Chlamydia trachomatis serovar D (strain ATCC VR-885 / DSM 19411 / UW-3/Cx).